We begin with the raw amino-acid sequence, 363 residues long: Uroporphyrinogen decarboxylase (363 aa).

Residues 27 to 31 (RQAGR), Asp-77, Tyr-157, Thr-212, and His-333 each bind substrate.

The protein belongs to the uroporphyrinogen decarboxylase family. In terms of assembly, homodimer.

It localises to the cytoplasm. The enzyme catalyses uroporphyrinogen III + 4 H(+) = coproporphyrinogen III + 4 CO2. The protein operates within porphyrin-containing compound metabolism; protoporphyrin-IX biosynthesis; coproporphyrinogen-III from 5-aminolevulinate: step 4/4. Its function is as follows. Catalyzes the decarboxylation of four acetate groups of uroporphyrinogen-III to yield coproporphyrinogen-III. In Cupriavidus pinatubonensis (strain JMP 134 / LMG 1197) (Cupriavidus necator (strain JMP 134)), this protein is Uroporphyrinogen decarboxylase.